Reading from the N-terminus, the 180-residue chain is Large ribosomal subunit protein uL5 (180 aa).

Belongs to the universal ribosomal protein uL5 family. As to quaternary structure, part of the 50S ribosomal subunit; part of the 5S rRNA/L5/L18/L25 subcomplex. Contacts the 5S rRNA and the P site tRNA. Forms a bridge to the 30S subunit in the 70S ribosome.

Its function is as follows. This is one of the proteins that bind and probably mediate the attachment of the 5S RNA into the large ribosomal subunit, where it forms part of the central protuberance. In the 70S ribosome it contacts protein S13 of the 30S subunit (bridge B1b), connecting the 2 subunits; this bridge is implicated in subunit movement. Contacts the P site tRNA; the 5S rRNA and some of its associated proteins might help stabilize positioning of ribosome-bound tRNAs. In Xanthomonas campestris pv. campestris (strain 8004), this protein is Large ribosomal subunit protein uL5.